The primary structure comprises 399 residues: 1-deoxy-D-xylulose 5-phosphate reductoisomerase (399 aa).

NADPH is bound by residues T11, G12, S13, I14, G37, N39, and N125. K126 is a 1-deoxy-D-xylulose 5-phosphate binding site. E127 contributes to the NADPH binding site. D151 contacts Mn(2+). Residues S152, E153, S177, and H200 each coordinate 1-deoxy-D-xylulose 5-phosphate. Residue E153 coordinates Mn(2+). Residue G206 coordinates NADPH. Residues S213, N218, K219, and E222 each coordinate 1-deoxy-D-xylulose 5-phosphate. E222 is a binding site for Mn(2+).

The protein belongs to the DXR family. Requires Mg(2+) as cofactor. It depends on Mn(2+) as a cofactor.

The catalysed reaction is 2-C-methyl-D-erythritol 4-phosphate + NADP(+) = 1-deoxy-D-xylulose 5-phosphate + NADPH + H(+). Its pathway is isoprenoid biosynthesis; isopentenyl diphosphate biosynthesis via DXP pathway; isopentenyl diphosphate from 1-deoxy-D-xylulose 5-phosphate: step 1/6. Catalyzes the NADPH-dependent rearrangement and reduction of 1-deoxy-D-xylulose-5-phosphate (DXP) to 2-C-methyl-D-erythritol 4-phosphate (MEP). This Nostoc sp. (strain PCC 7120 / SAG 25.82 / UTEX 2576) protein is 1-deoxy-D-xylulose 5-phosphate reductoisomerase.